The following is a 247-amino-acid chain: DNA repair protein RecO (247 aa).

Belongs to the RecO family.

In terms of biological role, involved in DNA repair and RecF pathway recombination. The polypeptide is DNA repair protein RecO (Alkalilimnicola ehrlichii (strain ATCC BAA-1101 / DSM 17681 / MLHE-1)).